Reading from the N-terminus, the 91-residue chain is Small ribosomal subunit protein uS17 (91 aa).

Belongs to the universal ribosomal protein uS17 family. In terms of assembly, part of the 30S ribosomal subunit.

Its function is as follows. One of the primary rRNA binding proteins, it binds specifically to the 5'-end of 16S ribosomal RNA. The polypeptide is Small ribosomal subunit protein uS17 (Salinispora tropica (strain ATCC BAA-916 / DSM 44818 / JCM 13857 / NBRC 105044 / CNB-440)).